Reading from the N-terminus, the 396-residue chain is Elongation factor Tu (396 aa).

In terms of domain architecture, tr-type G spans 10-206; sequence KPHCNIGTIG…NVDEYIPQPE (197 aa). The tract at residues 19–26 is G1; sequence GHVDHGKT. 19-26 contributes to the GTP binding site; it reads GHVDHGKT. Residue Thr-26 participates in Mg(2+) binding. The segment at 60 to 64 is G2; that stretch reads GITIS. The interval 81–84 is G3; the sequence is DCPG. GTP contacts are provided by residues 81 to 85 and 136 to 139; these read DCPGH and NKCD. The interval 136–139 is G4; that stretch reads NKCD. The segment at 174 to 176 is G5; the sequence is SAL.

This sequence belongs to the TRAFAC class translation factor GTPase superfamily. Classic translation factor GTPase family. EF-Tu/EF-1A subfamily. In terms of assembly, monomer.

The protein resides in the cytoplasm. It carries out the reaction GTP + H2O = GDP + phosphate + H(+). Functionally, GTP hydrolase that promotes the GTP-dependent binding of aminoacyl-tRNA to the A-site of ribosomes during protein biosynthesis. The sequence is that of Elongation factor Tu from Bradyrhizobium sp. (strain BTAi1 / ATCC BAA-1182).